The following is a 309-amino-acid chain: MTPRHFLRDDDLSPAEQAEVLALAAELKKDPFSARPLEGPRGVAVLFDKNSTRTRFSFEVGIAQLGGHAVVVDARSTQLGRDETLEDTARVLSRYVEAIVWRTFEQQRLEAMAGAATVPVINALSDEFHPCQMLADLQAIAEHKGSLSGLRMCYLGDGANNMAHSLMLGGVTAGIHVTIAAPDGFTPAPEFVAAARRRAESTGATVTLTTDARAAARGVDVLVTDTWTSMGQEDDGLDRRTPFWPYQLNADLVSLADPEAIVLHCLPAHRGEEITDEVMDGPSSVVWDEAENRLHAQKALLTWLLERQS.

Residues S51 to T54, Q78, R102, and H129 to Q132 contribute to the carbamoyl phosphate site. Residues N161, D225, and S229–M230 each bind L-ornithine. Residues C265–L266 and R293 contribute to the carbamoyl phosphate site.

Belongs to the aspartate/ornithine carbamoyltransferase superfamily. OTCase family.

The protein localises to the cytoplasm. The enzyme catalyses carbamoyl phosphate + L-ornithine = L-citrulline + phosphate + H(+). It functions in the pathway amino-acid biosynthesis; L-arginine biosynthesis; L-arginine from L-ornithine and carbamoyl phosphate: step 1/3. Its function is as follows. Reversibly catalyzes the transfer of the carbamoyl group from carbamoyl phosphate (CP) to the N(epsilon) atom of ornithine (ORN) to produce L-citrulline. The sequence is that of Ornithine carbamoyltransferase from Mycolicibacterium paratuberculosis (strain ATCC BAA-968 / K-10) (Mycobacterium paratuberculosis).